A 78-amino-acid chain; its full sequence is Sec-independent protein translocase protein TatA (78 aa).

The helical transmembrane segment at 1-21 (MGGISIWQLLIIAVIVVLLFG) threads the bilayer. The span at 47 to 59 (ESEKKDADFEPKS) shows a compositional bias: basic and acidic residues. Residues 47–78 (ESEKKDADFEPKSLEQQSKQAATESKKDKEQA) are disordered. A compositionally biased stretch (polar residues) spans 60-69 (LEQQSKQAAT).

The protein belongs to the TatA/E family. The Tat system comprises two distinct complexes: a TatABC complex, containing multiple copies of TatA, TatB and TatC subunits, and a separate TatA complex, containing only TatA subunits. Substrates initially bind to the TatABC complex, which probably triggers association of the separate TatA complex to form the active translocon.

It localises to the cell inner membrane. Part of the twin-arginine translocation (Tat) system that transports large folded proteins containing a characteristic twin-arginine motif in their signal peptide across membranes. TatA could form the protein-conducting channel of the Tat system. The polypeptide is Sec-independent protein translocase protein TatA (Vibrio vulnificus (strain CMCP6)).